Reading from the N-terminus, the 747-residue chain is Beta-glucosidase BoGH3A (747 aa).

Positions 1-26 (MIIGIMKTFLLTICFLSVQTGMVAIA) are cleaved as a signal peptide. Asp273 is a catalytic residue.

It belongs to the glycosyl hydrolase 3 family.

The protein resides in the periplasm. The catalysed reaction is Hydrolysis of terminal, non-reducing beta-D-glucosyl residues with release of beta-D-glucose.. The protein operates within glucan metabolism; xyloglucan degradation. In terms of biological role, catalyzes the hydrolysis of terminal, non-reducing beta-D-glucosyl residues with release of beta-D-glucose in xyloglucan degradation, leading to remove the backbone 'G' units. The protein is Beta-glucosidase BoGH3A of Bacteroides ovatus (strain ATCC 8483 / DSM 1896 / JCM 5824 / BCRC 10623 / CCUG 4943 / NCTC 11153).